A 356-amino-acid chain; its full sequence is Ferredoxin--NADP reductase (356 aa).

8 residues coordinate FAD: Thr25, Glu44, Gln52, Tyr57, Val97, Phe132, Asp298, and Ser339.

It belongs to the ferredoxin--NADP reductase type 2 family. Homodimer. Requires FAD as cofactor.

The catalysed reaction is 2 reduced [2Fe-2S]-[ferredoxin] + NADP(+) + H(+) = 2 oxidized [2Fe-2S]-[ferredoxin] + NADPH. The protein is Ferredoxin--NADP reductase of Chlorobaculum parvum (strain DSM 263 / NCIMB 8327) (Chlorobium vibrioforme subsp. thiosulfatophilum).